A 475-amino-acid chain; its full sequence is 3-isopropylmalate dehydratase large subunit (475 aa).

Cys-349, Cys-409, and Cys-412 together coordinate [4Fe-4S] cluster.

It belongs to the aconitase/IPM isomerase family. LeuC type 1 subfamily. Heterodimer of LeuC and LeuD. [4Fe-4S] cluster is required as a cofactor.

It catalyses the reaction (2R,3S)-3-isopropylmalate = (2S)-2-isopropylmalate. It functions in the pathway amino-acid biosynthesis; L-leucine biosynthesis; L-leucine from 3-methyl-2-oxobutanoate: step 2/4. Functionally, catalyzes the isomerization between 2-isopropylmalate and 3-isopropylmalate, via the formation of 2-isopropylmaleate. The protein is 3-isopropylmalate dehydratase large subunit of Cereibacter sphaeroides (strain KD131 / KCTC 12085) (Rhodobacter sphaeroides).